The following is a 327-amino-acid chain: Lipoyl synthase (327 aa).

[4Fe-4S] cluster is bound by residues Cys-66, Cys-71, Cys-77, Cys-92, Cys-96, Cys-99, and Ser-306. One can recognise a Radical SAM core domain in the interval 78–295 (FSKGTATFMI…EKEAYELGFS (218 aa)).

It belongs to the radical SAM superfamily. Lipoyl synthase family. [4Fe-4S] cluster is required as a cofactor.

It localises to the cytoplasm. The enzyme catalyses [[Fe-S] cluster scaffold protein carrying a second [4Fe-4S](2+) cluster] + N(6)-octanoyl-L-lysyl-[protein] + 2 oxidized [2Fe-2S]-[ferredoxin] + 2 S-adenosyl-L-methionine + 4 H(+) = [[Fe-S] cluster scaffold protein] + N(6)-[(R)-dihydrolipoyl]-L-lysyl-[protein] + 4 Fe(3+) + 2 hydrogen sulfide + 2 5'-deoxyadenosine + 2 L-methionine + 2 reduced [2Fe-2S]-[ferredoxin]. The protein operates within protein modification; protein lipoylation via endogenous pathway; protein N(6)-(lipoyl)lysine from octanoyl-[acyl-carrier-protein]: step 2/2. Functionally, catalyzes the radical-mediated insertion of two sulfur atoms into the C-6 and C-8 positions of the octanoyl moiety bound to the lipoyl domains of lipoate-dependent enzymes, thereby converting the octanoylated domains into lipoylated derivatives. This Neisseria meningitidis serogroup A / serotype 4A (strain DSM 15465 / Z2491) protein is Lipoyl synthase.